The following is a 158-amino-acid chain: NADH-quinone oxidoreductase subunit B (158 aa).

4 residues coordinate [4Fe-4S] cluster: C37, C38, C102, and C132.

The protein belongs to the complex I 20 kDa subunit family. NDH-1 is composed of 14 different subunits. Subunits NuoB, C, D, E, F, and G constitute the peripheral sector of the complex. [4Fe-4S] cluster is required as a cofactor.

The protein resides in the cell inner membrane. It catalyses the reaction a quinone + NADH + 5 H(+)(in) = a quinol + NAD(+) + 4 H(+)(out). In terms of biological role, NDH-1 shuttles electrons from NADH, via FMN and iron-sulfur (Fe-S) centers, to quinones in the respiratory chain. Couples the redox reaction to proton translocation (for every two electrons transferred, four hydrogen ions are translocated across the cytoplasmic membrane), and thus conserves the redox energy in a proton gradient. This is NADH-quinone oxidoreductase subunit B from Methylobacillus flagellatus (strain ATCC 51484 / DSM 6875 / VKM B-1610 / KT).